Consider the following 198-residue polypeptide: Ribonuclease HII (198 aa).

An RNase H type-2 domain is found at 3–198; it reads FLEGGVDEAG…SWRTLRGESP (196 aa). A divalent metal cation contacts are provided by Asp9, Glu10, and Asp104.

It belongs to the RNase HII family. It depends on Mn(2+) as a cofactor. Mg(2+) is required as a cofactor.

The protein localises to the cytoplasm. It carries out the reaction Endonucleolytic cleavage to 5'-phosphomonoester.. Endonuclease that specifically degrades the RNA of RNA-DNA hybrids. The polypeptide is Ribonuclease HII (Pyrobaculum neutrophilum (strain DSM 2338 / JCM 9278 / NBRC 100436 / V24Sta) (Thermoproteus neutrophilus)).